A 134-amino-acid polypeptide reads, in one-letter code: NADH-quinone oxidoreductase subunit A (134 aa).

A run of 3 helical transmembrane segments spans residues 14 to 34 (FFMFIFFSLGLCFFMLCLSWI), 66 to 86 (FYLIAMFFVVFDVEALYLYAW), and 96 to 116 (IGFSEALMFGISLLLGLFYLV).

The protein belongs to the complex I subunit 3 family. In terms of assembly, NDH-1 is composed of 13 different subunits. Subunits NuoA, H, J, K, L, M, N constitute the membrane sector of the complex.

It localises to the cell membrane. It carries out the reaction a quinone + NADH + 5 H(+)(in) = a quinol + NAD(+) + 4 H(+)(out). NDH-1 shuttles electrons from NADH, via FMN and iron-sulfur (Fe-S) centers, to quinones in the respiratory chain. The immediate electron acceptor for the enzyme in this species is believed to be ubiquinone. Couples the redox reaction to proton translocation (for every two electrons transferred, four hydrogen ions are translocated across the cytoplasmic membrane), and thus conserves the redox energy in a proton gradient. The polypeptide is NADH-quinone oxidoreductase subunit A (Buchnera aphidicola subsp. Acyrthosiphon pisum (strain APS) (Acyrthosiphon pisum symbiotic bacterium)).